A 200-amino-acid polypeptide reads, in one-letter code: Large ribosomal subunit protein uL4 (200 aa).

Residues 38–68 form a disordered region; that stretch reads GRQGSKQQKTRSDVRGGGKRPWRQKGTGRAR. The segment covering 54–65 has biased composition (basic residues); it reads GGKRPWRQKGTG.

This sequence belongs to the universal ribosomal protein uL4 family. Part of the 50S ribosomal subunit.

One of the primary rRNA binding proteins, this protein initially binds near the 5'-end of the 23S rRNA. It is important during the early stages of 50S assembly. It makes multiple contacts with different domains of the 23S rRNA in the assembled 50S subunit and ribosome. Its function is as follows. Forms part of the polypeptide exit tunnel. In Pseudomonas fluorescens (strain Pf0-1), this protein is Large ribosomal subunit protein uL4.